A 92-amino-acid polypeptide reads, in one-letter code: Putative defensin-like protein 225 (92 aa).

An N-terminal signal peptide occupies residues 1–26 (MKYGVLFMVSCGVMFLILSHVEEVEA). 3 disulfide bridges follow: Cys32–Cys92, Cys42–Cys70, and Cys68–Cys88.

This sequence belongs to the DEFL family.

Its subcellular location is the secreted. The protein is Putative defensin-like protein 225 (SCRL1) of Arabidopsis thaliana (Mouse-ear cress).